We begin with the raw amino-acid sequence, 405 residues long: Probable tRNA sulfurtransferase (405 aa).

A THUMP domain is found at 60–165 (ETIDQRLKLV…QDAIYISNQL (106 aa)). ATP contacts are provided by residues 183-184 (ML), 208-209 (HF), Arg265, Gly287, and Gln296.

This sequence belongs to the ThiI family.

Its subcellular location is the cytoplasm. The catalysed reaction is [ThiI sulfur-carrier protein]-S-sulfanyl-L-cysteine + a uridine in tRNA + 2 reduced [2Fe-2S]-[ferredoxin] + ATP + H(+) = [ThiI sulfur-carrier protein]-L-cysteine + a 4-thiouridine in tRNA + 2 oxidized [2Fe-2S]-[ferredoxin] + AMP + diphosphate. It catalyses the reaction [ThiS sulfur-carrier protein]-C-terminal Gly-Gly-AMP + S-sulfanyl-L-cysteinyl-[cysteine desulfurase] + AH2 = [ThiS sulfur-carrier protein]-C-terminal-Gly-aminoethanethioate + L-cysteinyl-[cysteine desulfurase] + A + AMP + 2 H(+). Its pathway is cofactor biosynthesis; thiamine diphosphate biosynthesis. Catalyzes the ATP-dependent transfer of a sulfur to tRNA to produce 4-thiouridine in position 8 of tRNAs, which functions as a near-UV photosensor. Also catalyzes the transfer of sulfur to the sulfur carrier protein ThiS, forming ThiS-thiocarboxylate. This is a step in the synthesis of thiazole, in the thiamine biosynthesis pathway. The sulfur is donated as persulfide by IscS. The chain is Probable tRNA sulfurtransferase from Lactobacillus johnsonii (strain CNCM I-12250 / La1 / NCC 533).